Reading from the N-terminus, the 326-residue chain is Ribosomal RNA small subunit methyltransferase H (326 aa).

S-adenosyl-L-methionine-binding positions include 45 to 47 (GGH), Asp-65, Asp-113, and Gln-120. A disordered region spans residues 299-326 (PSAEEITRNPRSRSARLRAAERIAHDGR). Residues 316–326 (RAAERIAHDGR) are compositionally biased toward basic and acidic residues.

It belongs to the methyltransferase superfamily. RsmH family.

It is found in the cytoplasm. It carries out the reaction cytidine(1402) in 16S rRNA + S-adenosyl-L-methionine = N(4)-methylcytidine(1402) in 16S rRNA + S-adenosyl-L-homocysteine + H(+). In terms of biological role, specifically methylates the N4 position of cytidine in position 1402 (C1402) of 16S rRNA. The chain is Ribosomal RNA small subunit methyltransferase H from Thermomicrobium roseum (strain ATCC 27502 / DSM 5159 / P-2).